The primary structure comprises 139 residues: Large ribosomal subunit protein uL16 (139 aa).

It belongs to the universal ribosomal protein uL16 family. Part of the 50S ribosomal subunit.

In terms of biological role, binds 23S rRNA and is also seen to make contacts with the A and possibly P site tRNAs. This is Large ribosomal subunit protein uL16 from Koribacter versatilis (strain Ellin345).